The primary structure comprises 367 residues: Dimethyladenosine transferase 1, mitochondrial (367 aa).

The N-terminal 16 residues, 1–16 (MASASRLPPLPALRDF), are a transit peptide targeting the mitochondrion. S-adenosyl-L-methionine-binding positions include 30–33 (QNYL), Asn31, Leu33, Gly58, Glu80, Asp106, and Asn141.

This sequence belongs to the class I-like SAM-binding methyltransferase superfamily. rRNA adenine N(6)-methyltransferase family. KsgA subfamily.

It localises to the mitochondrion. In terms of biological role, probable S-adenosyl-L-methionine-dependent methyltransferase which specifically dimethylates mitochondrial 12S rRNA at the conserved stem loop. Also required for basal transcription of mitochondrial DNA. Stimulates transcription independently of the methyltransferase activity. The polypeptide is Dimethyladenosine transferase 1, mitochondrial (tfbm-1) (Caenorhabditis elegans).